We begin with the raw amino-acid sequence, 258 residues long: UPF0246 protein YPK_3600 (258 aa).

The protein belongs to the UPF0246 family.

This is UPF0246 protein YPK_3600 from Yersinia pseudotuberculosis serotype O:3 (strain YPIII).